A 383-amino-acid polypeptide reads, in one-letter code: Putative gustatory receptor 22c (383 aa).

Residues 1–11 lie on the Cytoplasmic side of the membrane; it reads MFASRSDLQSR. The helical transmembrane segment at 12–32 threads the bilayer; that stretch reads LCWIILKATLYSSWFLGVFPY. The Extracellular segment spans residues 33 to 45; it reads RFDSRNGQLKRSR. A helical membrane pass occupies residues 46-66; it reads FLLFYGLILNFFLLLKMVCSG. Over 67 to 86 the chain is Cytoplasmic; that stretch reads GQKLGIPEAFARNSVLENTH. A helical transmembrane segment spans residues 87 to 107; it reads YTTGMLAVFSCVVIHFLNFWG. Residues 108 to 144 lie on the Extracellular side of the membrane; the sequence is STRVQDLANELLVLEYQQFASLNETKCPKFNSFVIQK. N-linked (GlcNAc...) asparagine glycosylation is present at Asn-130. The chain crosses the membrane as a helical span at residues 145 to 165; that stretch reads WLSVIGLLLSYLSIAYGLPGN. Residues 166–250 lie on the Cytoplasmic side of the membrane; sequence NFSVEMVLIN…YMVATYEYHM (85 aa). Residues 251–271 form a helical membrane-spanning segment; it reads TLVLTTGLASNFLAIYSWIVL. The Extracellular portion of the chain corresponds to 272–279; that stretch reads DISMNINF. The helical transmembrane segment at 280 to 300 threads the bilayer; the sequence is IYLLIFPLFLLVNVWNLWLSI. The Cytoplasmic segment spans residues 301–360; that stretch reads AASDLAENAGKSTQTVLKLFADLEVKDIELERSVNEFALLCGHCQFNFHVCGLFTINYKM. A helical transmembrane segment spans residues 361–381; that stretch reads GFQMIITSFLYLIYMIQFDFM. Topologically, residues 382-383 are extracellular; the sequence is NL.

The protein belongs to the insect chemoreceptor superfamily. Gustatory receptor (GR) family. Gr22e subfamily. As to expression, taste bristles in the foreleg and labial palps.

The protein resides in the cell membrane. Its function is as follows. Probable gustatory receptor which mediates acceptance or avoidance behavior, depending on its substrates. The chain is Putative gustatory receptor 22c (Gr22c) from Drosophila melanogaster (Fruit fly).